The chain runs to 154 residues: Terephthalate 1,2-dioxygenase, terminal oxygenase component subunit beta 1 (154 aa).

It belongs to the bacterial ring-hydroxylating dioxygenase beta subunit family. In terms of assembly, heterotetramer composed of 2 alpha (TphA2I and TphA2II) and 2 beta (TphA3I and TphA3II) subunits. Part of a multicomponent enzyme system composed of a reductase (TphA1I or TphA1II) and a two-subunit oxygenase component (TphA2I or TphA2II and TphA3I or TphA3II). It depends on Fe cation as a cofactor.

The catalysed reaction is terephthalate + NADH + O2 + H(+) = (3S,4R)-3,4-dihydroxycyclohexa-1,5-diene-1,4-dicarboxylate + NAD(+). With respect to regulation, inhibited by EDTA. Component of the terephthalate 1,2-dioxygenase multicomponent enzyme system which catalyzes the dioxygenation of terephthalate (TER/TPA) to 1,2-dihydroxy-3,5-cyclohexadiene-1,4-dicarboxylic acid (DCD). It can also use 2,5-dicarboxypyridine (PDC) and 1,4-napthalenedicarboxylic acid (NDC) as substrates, and preferentially uses NADPH which is the physiological electron donor. This Comamonas sp protein is Terephthalate 1,2-dioxygenase, terminal oxygenase component subunit beta 1 (tphA3I).